The primary structure comprises 237 residues: 1-(5-phosphoribosyl)-5-[(5-phosphoribosylamino)methylideneamino] imidazole-4-carboxamide isomerase (237 aa).

Asp8 acts as the Proton acceptor in catalysis. Asp130 (proton donor) is an active-site residue.

It belongs to the HisA/HisF family.

The protein resides in the cytoplasm. The enzyme catalyses 1-(5-phospho-beta-D-ribosyl)-5-[(5-phospho-beta-D-ribosylamino)methylideneamino]imidazole-4-carboxamide = 5-[(5-phospho-1-deoxy-D-ribulos-1-ylimino)methylamino]-1-(5-phospho-beta-D-ribosyl)imidazole-4-carboxamide. The protein operates within amino-acid biosynthesis; L-histidine biosynthesis; L-histidine from 5-phospho-alpha-D-ribose 1-diphosphate: step 4/9. This Caldicellulosiruptor saccharolyticus (strain ATCC 43494 / DSM 8903 / Tp8T 6331) protein is 1-(5-phosphoribosyl)-5-[(5-phosphoribosylamino)methylideneamino] imidazole-4-carboxamide isomerase.